We begin with the raw amino-acid sequence, 245 residues long: tRNA (guanine-N(1)-)-methyltransferase (245 aa).

Residues Gly-113 and 133–138 contribute to the S-adenosyl-L-methionine site; that span reads IGDYVL.

This sequence belongs to the RNA methyltransferase TrmD family. In terms of assembly, homodimer.

The protein localises to the cytoplasm. It carries out the reaction guanosine(37) in tRNA + S-adenosyl-L-methionine = N(1)-methylguanosine(37) in tRNA + S-adenosyl-L-homocysteine + H(+). In terms of biological role, specifically methylates guanosine-37 in various tRNAs. This is tRNA (guanine-N(1)-)-methyltransferase from Anoxybacillus flavithermus (strain DSM 21510 / WK1).